The sequence spans 423 residues: Glucose-1-phosphate adenylyltransferase (423 aa).

Residues Y112, G177, E192–K193, and S210 contribute to the alpha-D-glucose 1-phosphate site.

The protein belongs to the bacterial/plant glucose-1-phosphate adenylyltransferase family. In terms of assembly, homotetramer.

The catalysed reaction is alpha-D-glucose 1-phosphate + ATP + H(+) = ADP-alpha-D-glucose + diphosphate. Its pathway is glycan biosynthesis; glycogen biosynthesis. Involved in the biosynthesis of ADP-glucose, a building block required for the elongation reactions to produce glycogen. Catalyzes the reaction between ATP and alpha-D-glucose 1-phosphate (G1P) to produce pyrophosphate and ADP-Glc. The chain is Glucose-1-phosphate adenylyltransferase from Rhodospirillum rubrum (strain ATCC 11170 / ATH 1.1.1 / DSM 467 / LMG 4362 / NCIMB 8255 / S1).